Here is a 395-residue protein sequence, read N- to C-terminus: Tryptophan--tRNA ligase (395 aa).

Residues 8-10 and 16-17 each bind ATP; these read RPT and GH. Residues 9 to 17 carry the 'HIGH' region motif; the sequence is PTGKLHLGH. Residues 117 to 179 form an insert region; sequence RLTDLEKEFK…EIEPEILKRL (63 aa). Residue Asp204 participates in L-tryptophan binding. ATP-binding positions include 216-218, Ile254, and 261-265; these read GED and KMSKS. Residues 261–265 carry the 'KMSKS' region motif; the sequence is KMSKS.

Belongs to the class-I aminoacyl-tRNA synthetase family. Homodimer.

Its subcellular location is the cytoplasm. It catalyses the reaction tRNA(Trp) + L-tryptophan + ATP = L-tryptophyl-tRNA(Trp) + AMP + diphosphate + H(+). Its function is as follows. Catalyzes the attachment of tryptophan to tRNA(Trp). This is Tryptophan--tRNA ligase from Aquifex aeolicus (strain VF5).